Consider the following 299-residue polypeptide: MKPDAHQVKQFLLNLQDTICQQLTAVDGAEFVEDSWQREAGGGGRSRVLRNGGVFEQAGVNFSHVHGEAMPASATAHRPELAGRSFEAMGVSLVVHPHNPYVPTSHANVRFFIAEKPGADPVWWFGGGFDLTPFYGFEEDAIHWHRTARDLCLPFGEDVYPRYKKWCDEYFYLKHRNEQRGIGGLFFDDLNTPDFDRCFAFMQAVGKGYTDAYLPIVERRKAMAYGERERNFQLYRRGRYVEFNLVWDRGTLFGLQTGGRTESILMSMPPLVRWEYDYQPKDGSPEAALSEFIKVRDWV.

Serine 92 contacts substrate. Mn(2+)-binding residues include histidine 96 and histidine 106. The active-site Proton donor is the histidine 106. 108-110 (NVR) is a substrate binding site. The Mn(2+) site is built by histidine 145 and histidine 175. Residues 240 to 275 (YVEFNLVWDRGTLFGLQTGGRTESILMSMPPLVRWE) form an important for dimerization region. Position 258 to 260 (258 to 260 (GGR)) interacts with substrate.

It belongs to the aerobic coproporphyrinogen-III oxidase family. As to quaternary structure, homodimer. Mn(2+) serves as cofactor.

It is found in the cytoplasm. The catalysed reaction is coproporphyrinogen III + O2 + 2 H(+) = protoporphyrinogen IX + 2 CO2 + 2 H2O. It participates in porphyrin-containing compound metabolism; protoporphyrin-IX biosynthesis; protoporphyrinogen-IX from coproporphyrinogen-III (O2 route): step 1/1. Involved in the heme biosynthesis. Catalyzes the aerobic oxidative decarboxylation of propionate groups of rings A and B of coproporphyrinogen-III to yield the vinyl groups in protoporphyrinogen-IX. The chain is Oxygen-dependent coproporphyrinogen-III oxidase from Escherichia coli (strain K12 / MC4100 / BW2952).